Here is a 98-residue protein sequence, read N- to C-terminus: Large ribosomal subunit protein uL23 (98 aa).

Belongs to the universal ribosomal protein uL23 family. As to quaternary structure, part of the 50S ribosomal subunit. Contacts protein L29, and trigger factor when it is bound to the ribosome.

In terms of biological role, one of the early assembly proteins it binds 23S rRNA. One of the proteins that surrounds the polypeptide exit tunnel on the outside of the ribosome. Forms the main docking site for trigger factor binding to the ribosome. The sequence is that of Large ribosomal subunit protein uL23 from Hahella chejuensis (strain KCTC 2396).